The sequence spans 308 residues: Transaldolase (308 aa).

Lysine 125 functions as the Schiff-base intermediate with substrate in the catalytic mechanism.

It belongs to the transaldolase family. Type 1 subfamily. Homodimer.

It is found in the cytoplasm. The enzyme catalyses D-sedoheptulose 7-phosphate + D-glyceraldehyde 3-phosphate = D-erythrose 4-phosphate + beta-D-fructose 6-phosphate. It functions in the pathway carbohydrate degradation; pentose phosphate pathway; D-glyceraldehyde 3-phosphate and beta-D-fructose 6-phosphate from D-ribose 5-phosphate and D-xylulose 5-phosphate (non-oxidative stage): step 2/3. Transaldolase is important for the balance of metabolites in the pentose-phosphate pathway. The chain is Transaldolase from Pseudomonas putida (strain W619).